The following is a 287-amino-acid chain: 3-alpha-hydroxysteroid sulfotransferase (287 aa).

44–49 (KSGTNW) is a binding site for 3'-phosphoadenylyl sulfate. 2 residues coordinate substrate: Trp72 and Trp77. The active-site Proton acceptor is the His99. Residues Arg121, Ser129, Tyr184, 218–223 (SSFQFM), and 247–249 (RKG) each bind 3'-phosphoadenylyl sulfate.

Belongs to the sulfotransferase 1 family. As to quaternary structure, homodimer. Adrenal gland and liver.

The protein localises to the cytoplasm. It catalyses the reaction an alcohol + 3'-phosphoadenylyl sulfate = an alkyl sulfate + adenosine 3',5'-bisphosphate + H(+). Its function is as follows. Sulfotransferase that utilizes 3'-phospho-5'-adenylyl sulfate (PAPS) as sulfonate donor to catalyze the sulfonation of 3-alpha-hydroxyl groups of neutral steroids. The protein is 3-alpha-hydroxysteroid sulfotransferase (STD1) of Cavia porcellus (Guinea pig).